A 400-amino-acid chain; its full sequence is Tryptophan synthase beta chain (400 aa).

An N6-(pyridoxal phosphate)lysine modification is found at Lys-91.

The protein belongs to the TrpB family. As to quaternary structure, tetramer of two alpha and two beta chains. Pyridoxal 5'-phosphate is required as a cofactor.

It carries out the reaction (1S,2R)-1-C-(indol-3-yl)glycerol 3-phosphate + L-serine = D-glyceraldehyde 3-phosphate + L-tryptophan + H2O. The protein operates within amino-acid biosynthesis; L-tryptophan biosynthesis; L-tryptophan from chorismate: step 5/5. Functionally, the beta subunit is responsible for the synthesis of L-tryptophan from indole and L-serine. The chain is Tryptophan synthase beta chain from Listeria monocytogenes serovar 1/2a (strain ATCC BAA-679 / EGD-e).